Consider the following 157-residue polypeptide: DNA gyrase inhibitor (157 aa).

This sequence belongs to the DNA gyrase inhibitor family. Interacts with DNA gyrase.

It localises to the cytoplasm. Functionally, inhibits the supercoiling activity of DNA gyrase. Acts by inhibiting DNA gyrase at an early step, prior to (or at the step of) binding of DNA by the gyrase. It protects cells against toxins that target DNA gyrase, by inhibiting activity of these toxins and reducing the formation of lethal double-strand breaks in the cell. The chain is DNA gyrase inhibitor from Shigella boydii serotype 18 (strain CDC 3083-94 / BS512).